A 1271-amino-acid polypeptide reads, in one-letter code: Probable WRKY transcription factor protein 1 (1271 aa).

The span at 1–12 shows a compositional bias: polar residues; it reads MGAQYSTELNKY. Disordered stretches follow at residues 1 to 138, 204 to 312, and 370 to 515; these read MGAQ…NSDR, NNNN…QQNG, and NNNN…RTNS. Residues 9 to 71 adopt a coiled-coil conformation; sequence LNKYNNNNNN…NNNNNNNNNN (63 aa). Composition is skewed to low complexity over residues 13-103, 116-135, 204-216, and 223-259; these read NNNN…NNNN, INNT…NNNN, NNNN…NENN, and SSTT…NNNN. Acidic residues predominate over residues 260–274; that stretch reads NEDDEDDYGDDDTIE. Residues 297-312 are compositionally biased toward polar residues; the sequence is SNLNDTNGGNSPQQNG. The stretch at 320–372 forms a coiled coil; it reads KKLLALQQKQLEQEQEQKQQQKQQQQQQQQQQQQQQQQQQQQQKDAIENINNN. Positions 370–388 are enriched in low complexity; the sequence is NNNNNNKLQPIVKNSVNKT. A compositionally biased stretch (acidic residues) spans 413 to 442; the sequence is NEDEYDASDEYIDDDDDDDEKYDDDDDEYF. The span at 443-458 shows a compositional bias: low complexity; it reads EGNNNNNYKKNNISNK. A compositionally biased stretch (basic and acidic residues) spans 475–487; sequence EIFKQKKLNHDKN. Positions 488 to 515 are enriched in polar residues; it reads QSNPKQQLTSHSEFDNSLLNKNQSRTNS. Residues 520 to 574 adopt a coiled-coil conformation; sequence LQIKEENYHQIQQEHGEKQQQQQQQQQQPQQQQQQQQQQQQQQQQEMQVDKEQTE. Basic and acidic residues predominate over residues 578–587; the sequence is NTNKKEEQKP. Disordered stretches follow at residues 578–650 and 667–811; these read NTNK…EGFL and SKKS…NISN. The span at 610–642 shows a compositional bias: low complexity; the sequence is NNENNNNNNNNNNNNNNNNNNNNNNNNNNYRNN. Polar residues predominate over residues 672–702; the sequence is NVVPTSPKSNLSDQQPPFSPVQISPQKQSPA. 3 stretches are compositionally biased toward low complexity: residues 703 to 715, 725 to 766, and 774 to 811; these read TTTT…TPTP, NNNI…NNIN, and NSTQ…NISN. A coiled-coil region spans residues 766–786; that stretch reads NNEEDEENNSTQNNNNNNNNN. The segment at residues 808–872 is a DNA-binding region (WRKY 1); that stretch reads NISNIVSDGY…YKGEHCHGFP (65 aa). Residues Cys-839, Cys-844, His-867, and His-869 each coordinate Zn(2+). Positions 890–1095 are disordered; sequence FEGLDGNNNN…RFNGTSESKG (206 aa). The segment covering 895–918 has biased composition (low complexity); sequence GNNNNNNNNNNNNNNYSSNSNSNG. Over residues 919-937 the composition is skewed to gly residues; that stretch reads NGNGNGNGNGNGNGNGNGN. Residues 938–956 show a composition bias toward low complexity; sequence SNGNQDQNGNSFNDQNGDS. Over residues 957 to 966 the composition is skewed to polar residues; the sequence is PTQHGQISPM. Residues 967 to 995 are compositionally biased toward low complexity; the sequence is NSPKNTIPTTTTTTTSISTYVNTNSTNKK. Positions 998-1010 are enriched in basic and acidic residues; the sequence is SKQEKKISVKNET. Acidic residues predominate over residues 1011–1021; it reads TDDDEFQEDID. Residues 1013–1040 are a coiled coil; sequence DDEFQEDIDQLSNNNNNNNNNNNNNNNN. A compositionally biased stretch (low complexity) spans 1025-1085; the sequence is NNNNNNNNNN…NNNNNNNNNN (61 aa). Positions 1105-1167 form a DNA-binding region, WRKY 2; it reads SSIDHLDDGF…YRGKHNHDPP (63 aa). Residues Cys-1136, Cys-1141, His-1162, and His-1164 each coordinate Zn(2+). The tract at residues 1180–1210 is disordered; it reads NGLYNNNNNNNNNNNNNNNNNNNNNNINNIN. A compositionally biased stretch (low complexity) spans 1184–1210; the sequence is NNNNNNNNNNNNNNNNNNNNNNINNIN.

Belongs to the WRKY group I family.

The protein resides in the nucleus. Functionally, probable transcription factor. Interacts specifically with the W box (5'-(T)TGAC[CT]-3'), a frequently occurring elicitor-responsive cis-acting element. In Dictyostelium discoideum (Social amoeba), this protein is Probable WRKY transcription factor protein 1 (wrky1).